A 404-amino-acid polypeptide reads, in one-letter code: uncharacterized protein (404 aa).

It belongs to the lymphocryptovirus BTRF1 family.

This is an uncharacterized protein from Epstein-Barr virus (strain GD1) (HHV-4).